The chain runs to 837 residues: Tuftelin-interacting protein 11 (837 aa).

Basic and acidic residues-rich tracts occupy residues 1-13 (MSLSHLYRDGEGR) and 53-64 (VWAERDSDDERP). Disordered stretches follow at residues 1 to 21 (MSLSHLYRDGEGRIDDDDDER), 53 to 72 (VWAERDSDDERPSFGGKRAR), and 85 to 133 (LKKG…KGFA). Positions 1–50 (MSLSHLYRDGEGRIDDDDDERENFEITDWDLQNEFNPNRQRHWQTKEEAT) are required for interaction with DHX15. Phosphoserine occurs at positions 2, 59, and 98. Acidic residues predominate over residues 91 to 102 (EEAELEDSDDEE). Residues 103–116 (RPVKQDDFPKDFGP) show a composition bias toward basic and acidic residues. The residue at position 144 (Ser144) is a Phosphoserine. The region spanning 149 to 195 (TKGIGQKLLQKMGYVPGRGLGKNAQGIINPIEAKQRKGKGAVGAYGS) is the G-patch domain. A disordered region spans residues 179–236 (IEAKQRKGKGAVGAYGSERTTQSMQDFPVVDSEEEAEEEFQKELSQWRKDPSGSKKKP). Phosphoserine is present on Ser210. A compositionally biased stretch (basic and acidic residues) spans 217 to 231 (EFQKELSQWRKDPSG). Residues 700 to 705 (VKDKFN) carry the Nuclear localization signal motif. The interval 710–734 (IMNRAVSSNVGAYMQPGARENIAYL) is required for nuclear speckle localization.

It belongs to the TFP11/STIP family. As to quaternary structure, identified in the spliceosome C complex. Found in the Intron Large (IL) complex, a post-mRNA release spliceosomal complex containing the excised intron, U2, U5 and U6 snRNPs, and splicing factors. Interacts with TUFT1. Interacts with DHX15; indicative for a recruitment of DHX15 to the IL complex. Interacts with GCFC2.

It localises to the cytoplasm. Its subcellular location is the nucleus. Its function is as follows. Involved in pre-mRNA splicing, specifically in spliceosome disassembly during late-stage splicing events. Intron turnover seems to proceed through reactions in two lariat-intron associated complexes termed Intron Large (IL) and Intron Small (IS). In cooperation with DHX15 seems to mediate the transition of the U2, U5 and U6 snRNP-containing IL complex to the snRNP-free IS complex leading to efficient debranching and turnover of excised introns. May play a role in the differentiation of ameloblasts and odontoblasts or in the forming of the enamel extracellular matrix. The protein is Tuftelin-interacting protein 11 (TFIP11) of Macaca mulatta (Rhesus macaque).